The following is a 101-amino-acid chain: Phosphoribosyl-AMP cyclohydrolase (101 aa).

Aspartate 71 is a binding site for Mg(2+). Cysteine 72 provides a ligand contact to Zn(2+). Aspartate 73 and aspartate 75 together coordinate Mg(2+). Residues cysteine 88 and cysteine 95 each coordinate Zn(2+).

This sequence belongs to the PRA-CH family. Homodimer. Mg(2+) is required as a cofactor. It depends on Zn(2+) as a cofactor.

The protein resides in the cytoplasm. It carries out the reaction 1-(5-phospho-beta-D-ribosyl)-5'-AMP + H2O = 1-(5-phospho-beta-D-ribosyl)-5-[(5-phospho-beta-D-ribosylamino)methylideneamino]imidazole-4-carboxamide. Its pathway is amino-acid biosynthesis; L-histidine biosynthesis; L-histidine from 5-phospho-alpha-D-ribose 1-diphosphate: step 3/9. In terms of biological role, catalyzes the hydrolysis of the adenine ring of phosphoribosyl-AMP. The sequence is that of Phosphoribosyl-AMP cyclohydrolase from Bacillus cereus (strain ATCC 10987 / NRS 248).